A 443-amino-acid polypeptide reads, in one-letter code: MFLAQEIIRKKRNGLVLSAEEIQFFVKGITTNAVSEGQIAALGMAVYFNDMNMDERIALTTAMRDSGTVLNWQSLNLNGPVIDKHSTGGVGDVISLMLGPMAAACGGYVPMISGRGLGHTGGTLDKFDAIPGYQTEPSSELFRKVVKDVGVAIIGQTGDLVPADKRFYSIRDNTATVESISLITASILSKKLACSLDALAMDVKVGSGAFMPTYEASEELARSIAAVANGAGTKTTALLTDMNQVLASCAGNALEVKEAIDFLTGAYRNPRLYAVTMGLCAEMLLLGGLATDEADARAKLNRVLDNGRAAEIFGKMVSGLGGPVDFVENYSKYLPQSQIIRPVFADTQGYAHSMDTRELGLAVVTLGGGRRKPGDELDYSVGLTQVCALGDKIDASTPIAVIHAQSEEAFAQAEDAVKKAIHIDEIAPEKTPEIYAYIRATDL.

The protein belongs to the thymidine/pyrimidine-nucleoside phosphorylase family. In terms of assembly, homodimer.

The catalysed reaction is thymidine + phosphate = 2-deoxy-alpha-D-ribose 1-phosphate + thymine. It functions in the pathway pyrimidine metabolism; dTMP biosynthesis via salvage pathway; dTMP from thymine: step 1/2. Its function is as follows. The enzymes which catalyze the reversible phosphorolysis of pyrimidine nucleosides are involved in the degradation of these compounds and in their utilization as carbon and energy sources, or in the rescue of pyrimidine bases for nucleotide synthesis. This Shewanella oneidensis (strain ATCC 700550 / JCM 31522 / CIP 106686 / LMG 19005 / NCIMB 14063 / MR-1) protein is Thymidine phosphorylase.